The primary structure comprises 287 residues: Elongation factor Ts (287 aa).

Residues 80-83 (TDFL) are involved in Mg(2+) ion dislocation from EF-Tu.

Belongs to the EF-Ts family.

It localises to the cytoplasm. Its function is as follows. Associates with the EF-Tu.GDP complex and induces the exchange of GDP to GTP. It remains bound to the aminoacyl-tRNA.EF-Tu.GTP complex up to the GTP hydrolysis stage on the ribosome. This is Elongation factor Ts from Stutzerimonas stutzeri (strain A1501) (Pseudomonas stutzeri).